The chain runs to 235 residues: Eukaryotic translation initiation factor 4E-1 (235 aa).

The tract at residues 1–36 (MVVEETIKATSTEDLSNTIANQNPRGRGGDEDEELE) is disordered. The span at 8–24 (KATSTEDLSNTIANQNP) shows a compositional bias: polar residues. 2 EIF4G-binding regions span residues 60 to 63 (HPLE) and 70 to 106 (FDNP…NNIH). MRNA is bound by residues 78–83 (KQATWG), K110, and 128–129 (WE). An intrachain disulfide couples C133 to C171. Residues 154 to 163 (YTLLAMIGEQ) form an EIF4G-binding region. Residues 178-183 (RSGQDK) and 223-227 (KKFDR) each bind mRNA.

Belongs to the eukaryotic initiation factor 4E family. As to quaternary structure, EIF4F is a multi-subunit complex, the composition of which varies with external and internal environmental conditions. It is composed of at least EIF4A, EIF4E and EIF4G. EIF4E is also known to interact with other partners. In higher plants two isoforms of EIF4F have been identified, named isoform EIF4F and isoform EIF(iso)4F. Isoform EIF4F has subunits p220 and p26, whereas isoform EIF(iso)4F has subunits p82 and p28. In terms of assembly, (Microbial infection) Interacts with potyvirus viral genome-linked protein (VPg); this interaction is possible in susceptible hosts but impaired in resistant plants. According to the redox status, the Cys-133-Cys-171 disulfide bridge may have a role in regulating protein function by affecting its ability to bind capped mRNA.

It localises to the nucleus. It is found in the cytoplasm. Functionally, component of the protein complex eIF4F, which is involved in the recognition of the mRNA cap, ATP-dependent unwinding of 5'-terminal secondary structure and recruitment of mRNA to the ribosome. Recognizes and binds the 7-methylguanosine-containing mRNA cap during an early step in the initiation of protein synthesis and facilitates ribosome binding by inducing the unwinding of the mRNAs secondary structures. Key component of recessive resistance to potyviruses. (Microbial infection) Susceptibility host factor required for viral infection by recruiting viral RNAs to the host ribosomal complex via an interaction with viral genome-linked protein (VPg). The protein is Eukaryotic translation initiation factor 4E-1 of Citrullus lanatus (Watermelon).